The following is a 122-amino-acid chain: Large ribosomal subunit protein uL14 (122 aa).

Belongs to the universal ribosomal protein uL14 family. Part of the 50S ribosomal subunit. Forms a cluster with proteins L3 and L19. In the 70S ribosome, L14 and L19 interact and together make contacts with the 16S rRNA in bridges B5 and B8.

Its function is as follows. Binds to 23S rRNA. Forms part of two intersubunit bridges in the 70S ribosome. The chain is Large ribosomal subunit protein uL14 from Psychrobacter sp. (strain PRwf-1).